The following is a 124-amino-acid chain: Holo-[acyl-carrier-protein] synthase (124 aa).

Mg(2+)-binding residues include aspartate 8 and glutamate 55.

The protein belongs to the P-Pant transferase superfamily. AcpS family. Mg(2+) is required as a cofactor.

Its subcellular location is the cytoplasm. It catalyses the reaction apo-[ACP] + CoA = holo-[ACP] + adenosine 3',5'-bisphosphate + H(+). Functionally, transfers the 4'-phosphopantetheine moiety from coenzyme A to a Ser of acyl-carrier-protein. This Desulfovibrio desulfuricans (strain ATCC 27774 / DSM 6949 / MB) protein is Holo-[acyl-carrier-protein] synthase.